Consider the following 237-residue polypeptide: Ribonuclease PH (237 aa).

Residues Arg86 and 124–126 (GTR) contribute to the phosphate site.

This sequence belongs to the RNase PH family. In terms of assembly, homohexameric ring arranged as a trimer of dimers.

It catalyses the reaction tRNA(n+1) + phosphate = tRNA(n) + a ribonucleoside 5'-diphosphate. Functionally, phosphorolytic 3'-5' exoribonuclease that plays an important role in tRNA 3'-end maturation. Removes nucleotide residues following the 3'-CCA terminus of tRNAs; can also add nucleotides to the ends of RNA molecules by using nucleoside diphosphates as substrates, but this may not be physiologically important. Probably plays a role in initiation of 16S rRNA degradation (leading to ribosome degradation) during starvation. In Alteromonas mediterranea (strain DSM 17117 / CIP 110805 / LMG 28347 / Deep ecotype), this protein is Ribonuclease PH.